The following is a 417-amino-acid chain: Carbon catabolite repressor protein 4 homolog 4 (417 aa).

N-acetylserine is present on Phe-2. Glu-143 serves as a coordination point for Mg(2+).

This sequence belongs to the CCR4/nocturin family. Component of the CCR4-NOT complex, at least composed of CRR4 and CAF1 proteins. Forms homooligomers. Mg(2+) serves as cofactor.

It localises to the nucleus. It is found in the cytoplasm. It carries out the reaction Exonucleolytic cleavage of poly(A) to 5'-AMP.. In terms of biological role, acts as a catalytic component of the CCR4-NOT core complex, which in the nucleus seems to be a general transcription factor, and in the cytoplasm the major mRNA deadenylase involved in mRNA turnover. Transcriptional regulator of circadian rhythms with poly(A)-degrading activity that affects the expression and rhythmicity of the clock core oscillator genes TOC1 and CCA1. Deadenylation may be a mechanism involved in the regulation of the circadian clock. May play a negative role in response against oxidative stress. Possesses magnesium-dependent poly(A)-specific exoribonuclease activity in vitro and is almost inactive with poly(U), poly(C) and poly(G) as substrates. In Arabidopsis thaliana (Mouse-ear cress), this protein is Carbon catabolite repressor protein 4 homolog 4.